Here is a 376-residue protein sequence, read N- to C-terminus: Multiphosphoryl transfer protein (376 aa).

Residues 2-142 (FQLSVQDIHP…EELRALLMGE (141 aa)) form the PTS EIIA type-2 domain. Catalysis depends on His62, which acts as the Tele-phosphohistidine intermediate; for EIIA activity. At His62 the chain carries Phosphohistidine; by HPr. The segment at 156 to 284 (TLDVIASSLV…LTSDDALTDD (129 aa)) is m domain. One can recognise an HPr domain in the interval 285-375 (VLSAEFVVRN…DAIAAGLGEG (91 aa)). His299 (pros-phosphohistidine intermediate; for HPr activity) is an active-site residue. A Phosphohistidine; by EI modification is found at His299.

The protein resides in the cytoplasm. In terms of biological role, the phosphoenolpyruvate-dependent sugar phosphotransferase system (sugar PTS), a major carbohydrate active transport system, catalyzes the phosphorylation of incoming sugar substrates concomitantly with their translocation across the cell membrane. The enzyme II FruAB PTS system is involved in fructose transport. The protein is Multiphosphoryl transfer protein (fruB) of Salmonella typhi.